A 367-amino-acid chain; its full sequence is MSLANQVLAVNDDLPIRTHKPVHSGKVRSVYWLTEEDSARLIKEKGYDVAPDAPLAIMVISDRISAFDCIWHGEGGLKGVPGKGAALNAISNHWFKLFKDNGLADSHILDIPHPFVWIVQKAKPVKIEAICRKYITGSMWRAYANGEREFCGIQLPEGLEKDKALPNLLMTPSTKGILKGIPGVPEADDVNITRQNIVDNYEAFNFSSAEDIAQYEKLLKEGFNVISQALEGIDQIFVDTKFEFGYVHDAAGNEKLIYMDEVGTPDSSRIWDAKEYQAGNIVENSKEGFRQFLLNHFPDPDILLNKERMPEREALARDNDLPVESLMDISRTYIGIAEKITGKPITLSENPKAEIIEILSKEYGLID.

This sequence belongs to the SAICAR synthetase family.

The enzyme catalyses 5-amino-1-(5-phospho-D-ribosyl)imidazole-4-carboxylate + L-aspartate + ATP = (2S)-2-[5-amino-1-(5-phospho-beta-D-ribosyl)imidazole-4-carboxamido]succinate + ADP + phosphate + 2 H(+). It functions in the pathway purine metabolism; IMP biosynthesis via de novo pathway; 5-amino-1-(5-phospho-D-ribosyl)imidazole-4-carboxamide from 5-amino-1-(5-phospho-D-ribosyl)imidazole-4-carboxylate: step 1/2. This chain is Phosphoribosylaminoimidazole-succinocarboxamide synthase, found in Vibrio parahaemolyticus serotype O3:K6 (strain RIMD 2210633).